A 94-amino-acid polypeptide reads, in one-letter code: Protein S100-A1 (94 aa).

EF-hand domains lie at 13 to 48 and 50 to 85; these read INVF…FLDV and KDAD…LTVA. Ca(2+) contacts are provided by Lys-28, Glu-33, Asp-63, Asn-65, Asp-67, Glu-69, and Glu-74. At Cys-86 the chain carries S-nitrosocysteine.

Belongs to the S-100 family. As to quaternary structure, dimer of either two alpha chains, or two beta chains, or one alpha and one beta chain. Also forms heterodimers with S100P. Interacts with AGER. Interacts with CAPZA1. Interacts with FKBP4. Interacts with RYR1 and RYR2. Interacts with CACYBP in a calcium-dependent manner. Interacts with PPP5C (via TPR repeats); the interaction is calcium-dependent and modulates PPP5C activity. Interacts with ATP2A2 and PLN in a Ca(2+)-dependent manner. Interacts with mitochondrial F1-ATPase subunits ATP5F1A and ATP5F1B; these interactions increase F1-ATPase activity. Glutathionylated; glutathionylation increases affinity to calcium about 10-fold. In terms of tissue distribution, although predominant among the water-soluble brain proteins, S100 is also found in a variety of other tissues.

The protein localises to the cytoplasm. The protein resides in the sarcoplasmic reticulum. It localises to the mitochondrion. Small calcium binding protein that plays important roles in several biological processes such as Ca(2+) homeostasis, chondrocyte biology and cardiomyocyte regulation. In response to an increase in intracellular Ca(2+) levels, binds calcium which triggers conformational changes. These changes allow interactions with specific target proteins and modulate their activity. Regulates a network in cardiomyocytes controlling sarcoplasmic reticulum Ca(2+) cycling and mitochondrial function through interaction with the ryanodine receptors RYR1 and RYR2, sarcoplasmic reticulum Ca(2+)-ATPase/ATP2A2 and mitochondrial F1-ATPase. Facilitates diastolic Ca(2+) dissociation and myofilament mechanics in order to improve relaxation during diastole. The protein is Protein S100-A1 (S100a1) of Rattus norvegicus (Rat).